The primary structure comprises 643 residues: MTNNSGNNSGNSNNPRTENHFDYVRITLASPERIMEWGQRTLPNGQIVGEVTKPETINYRTLKPEMDGLFCEKIFGPSKDWECHCGKYKRVRHRGIVCERCGVEVTESRVRRHRMGFIKLAAPVSHVWYLKGIPSYVAILLDMPLRDVEQIVYFNCYTVLSPGDNSNLFYQQLLTEDEWLEIEDETYAEDSKIISEPIVGIGAEALKYLLKELDLPFIGDGLRQEITGSKGQRRAKLIKRLRVIDNFIATGAKPEWMVLDVVPVIPPDLRPMVQLDGGRFATSDLNDLYRRVINRNNRLGRLKEILAPEIIIRNEKRMLQEAVDALIDNGRRGRTVVGANNRPLKSLSDIIEGKQGRFRQNLLGKRVDYSGRSVIVVGPRLKIHQCGLPKEMAIELFQPFVIHRLIRQNIVNNIKAAKKLIQRADDEVMQVLQEVIEGHPILLNRAPTLHRLGIQAFEPKLVDGRAIQLHPLVCPAFNADFDGDQMAVHVPLSIEAQTEARILMLASANILSPATGEPVITPSQDMVLGIYYLTSSKPAQTQPAFGERGLTFANTYDVISAYDNDRIGLHTWIWVRFSGEVEDDDESEMPIKIETAEDGSYTELWRYRRERFDKDKALVSRYLLTTVGRVIMNTSIMNSINAN.

Residues Cys83, Cys85, Cys98, and Cys101 each coordinate Zn(2+). Residues Asp480, Asp482, and Asp484 each coordinate Mg(2+).

This sequence belongs to the RNA polymerase beta' chain family. RpoC1 subfamily. In terms of assembly, in plastids the minimal PEP RNA polymerase catalytic core is composed of four subunits: alpha, beta, beta', and beta''. When a (nuclear-encoded) sigma factor is associated with the core the holoenzyme is formed, which can initiate transcription. The cofactor is Mg(2+). Requires Zn(2+) as cofactor.

The protein localises to the plastid. It is found in the organellar chromatophore. It carries out the reaction RNA(n) + a ribonucleoside 5'-triphosphate = RNA(n+1) + diphosphate. Its function is as follows. DNA-dependent RNA polymerase catalyzes the transcription of DNA into RNA using the four ribonucleoside triphosphates as substrates. The chain is DNA-directed RNA polymerase subunit beta' from Paulinella chromatophora.